A 101-amino-acid polypeptide reads, in one-letter code: Non-histone chromosomal protein HMG-14 (101 aa).

Positions 1 to 101 (MPKRKVSSAE…EAEEKEAKSD (101 aa)) are disordered. Ser7 is modified (ADP-ribosylserine). Ser8 bears the Phosphoserine mark. Lys14 bears the N6-acetyllysine mark. Ser21 bears the Phosphoserine mark. Ser25 carries the ADP-ribosylserine; alternate modification. A Phosphoserine; alternate modification is found at Ser25. An N6-acetyllysine modification is found at Lys27. 2 stretches are compositionally biased toward basic and acidic residues: residues 33–51 (VETKPKKAAGKDKSSDKKV) and 70–86 (ETKEDLPAENGETKNEE). Thr82 is subject to Phosphothreonine. The residue at position 83 (Lys83) is an N6-acetyllysine. Phosphoserine occurs at positions 87, 90, and 100.

It belongs to the HMGN family. In terms of assembly, interacts with transcriptional regulator SEHBP. In terms of processing, phosphorylation on Ser-21 and Ser-25 weakens binding to nucleosomes and increases the rate of H3 phosphorylation.

The protein localises to the nucleus. Its function is as follows. Binds to the inner side of the nucleosomal DNA thus altering the interaction between the DNA and the histone octamer. May be involved in the process which maintains transcribable genes in a unique chromatin conformation. Inhibits the phosphorylation of nucleosomal histones H3 and H2A by RPS6KA5/MSK1 and RPS6KA3/RSK2. In Bos taurus (Bovine), this protein is Non-histone chromosomal protein HMG-14 (HMGN1).